The following is a 103-amino-acid chain: Large ribosomal subunit protein uL24 (103 aa).

The protein belongs to the universal ribosomal protein uL24 family. Part of the 50S ribosomal subunit.

In terms of biological role, one of two assembly initiator proteins, it binds directly to the 5'-end of the 23S rRNA, where it nucleates assembly of the 50S subunit. Its function is as follows. One of the proteins that surrounds the polypeptide exit tunnel on the outside of the subunit. The sequence is that of Large ribosomal subunit protein uL24 from Christiangramia forsetii (strain DSM 17595 / CGMCC 1.15422 / KT0803) (Gramella forsetii).